Reading from the N-terminus, the 355-residue chain is Aromatic amino acid aminotransferase (355 aa).

K217 is subject to N6-(pyridoxal phosphate)lysine.

This sequence belongs to the class-II pyridoxal-phosphate-dependent aminotransferase family. As to quaternary structure, homodimer. Requires pyridoxal 5'-phosphate as cofactor.

The enzyme catalyses an aromatic L-alpha-amino acid + 2-oxoglutarate = an aromatic oxo-acid + L-glutamate. Aminotransferase that catalyzes the conversion of aromatic amino acids and 2-oxoglutarate into corresponding aromatic oxo acids and L-glutamate. The protein is Aromatic amino acid aminotransferase of Mycobacterium avium (strain 104).